The chain runs to 82 residues: Small ribosomal subunit protein bS16 (82 aa).

This sequence belongs to the bacterial ribosomal protein bS16 family.

In Methylobacillus flagellatus (strain ATCC 51484 / DSM 6875 / VKM B-1610 / KT), this protein is Small ribosomal subunit protein bS16.